Here is a 342-residue protein sequence, read N- to C-terminus: S-adenosylmethionine:tRNA ribosyltransferase-isomerase (342 aa).

The protein belongs to the QueA family. Monomer.

The protein localises to the cytoplasm. The enzyme catalyses 7-aminomethyl-7-carbaguanosine(34) in tRNA + S-adenosyl-L-methionine = epoxyqueuosine(34) in tRNA + adenine + L-methionine + 2 H(+). The protein operates within tRNA modification; tRNA-queuosine biosynthesis. Its function is as follows. Transfers and isomerizes the ribose moiety from AdoMet to the 7-aminomethyl group of 7-deazaguanine (preQ1-tRNA) to give epoxyqueuosine (oQ-tRNA). In Shouchella clausii (strain KSM-K16) (Alkalihalobacillus clausii), this protein is S-adenosylmethionine:tRNA ribosyltransferase-isomerase.